A 175-amino-acid polypeptide reads, in one-letter code: Ribosome-binding factor A (175 aa).

The interval 131–175 (KPAGEADPYRDRGSVDEPSDAGGLVIRTSDGLEAENTGDDYQAED) is disordered. The segment covering 162–175 (LEAENTGDDYQAED) has biased composition (acidic residues).

Belongs to the RbfA family. As to quaternary structure, monomer. Binds 30S ribosomal subunits, but not 50S ribosomal subunits or 70S ribosomes.

The protein localises to the cytoplasm. One of several proteins that assist in the late maturation steps of the functional core of the 30S ribosomal subunit. Associates with free 30S ribosomal subunits (but not with 30S subunits that are part of 70S ribosomes or polysomes). Required for efficient processing of 16S rRNA. May interact with the 5'-terminal helix region of 16S rRNA. This is Ribosome-binding factor A from Mycobacterium ulcerans (strain Agy99).